A 529-amino-acid polypeptide reads, in one-letter code: Na(+)/H(+) antiporter NhaB (529 aa).

Helical transmembrane passes span Phe-13 to Pro-33, Ile-34 to Phe-54, Leu-90 to Met-110, Leu-113 to Leu-133, Cys-136 to Ile-156, Leu-205 to Pro-225, Phe-241 to Phe-261, Gly-306 to Ile-326, Gly-327 to Gly-347, Glu-351 to Ile-371, Ala-451 to Ile-471, and Val-479 to Phe-499.

The protein belongs to the NhaB Na(+)/H(+) (TC 2.A.34) antiporter family.

The protein localises to the cell inner membrane. It catalyses the reaction 2 Na(+)(in) + 3 H(+)(out) = 2 Na(+)(out) + 3 H(+)(in). In terms of biological role, na(+)/H(+) antiporter that extrudes sodium in exchange for external protons. This is Na(+)/H(+) antiporter NhaB from Vibrio vulnificus (strain CMCP6).